The primary structure comprises 61 residues: Photosystem II reaction center protein Z (61 aa).

Helical transmembrane passes span 5-25 and 38-58; these read LTAL…VALA and NKAF…DGIS.

Belongs to the PsbZ family. As to quaternary structure, PSII is composed of 1 copy each of membrane proteins PsbA, PsbB, PsbC, PsbD, PsbE, PsbF, PsbH, PsbI, PsbJ, PsbK, PsbL, PsbM, PsbT, PsbX, PsbY, PsbZ, Psb30/Ycf12, at least 3 peripheral proteins of the oxygen-evolving complex and a large number of cofactors. It forms dimeric complexes.

The protein localises to the plastid. It is found in the chloroplast thylakoid membrane. Functionally, may control the interaction of photosystem II (PSII) cores with the light-harvesting antenna, regulates electron flow through the 2 photosystem reaction centers. PSII is a light-driven water plastoquinone oxidoreductase, using light energy to abstract electrons from H(2)O, generating a proton gradient subsequently used for ATP formation. The sequence is that of Photosystem II reaction center protein Z from Skeletonema costatum (Marine centric diatom).